Reading from the N-terminus, the 721-residue chain is K(+)-insensitive pyrophosphate-energized proton pump (721 aa).

The next 5 helical transmembrane spans lie at 8-28, 57-77, 82-102, 136-156, and 168-188; these read LLGV…AVWV, YRTL…AIDM, FGLT…AGYL, VMGL…YLVF, and LVAL…GGGI. Substrate is bound at residue lysine 191. Residues aspartate 194, aspartate 198, asparagine 221, and aspartate 224 each coordinate Mg(2+). 5 consecutive transmembrane segments (helical) span residues 247–267, 294–314, 323–343, 374–394, and 416–436; these read AIFL…IILF, ISLA…IGAF, ALAL…IVKI, YGVG…VLGI, and AGIF…GIII. Aspartate 446 serves as a coordination point for Mg(2+). Helical transmembrane passes span 483-503, 527-547, 599-619, and 621-641; these read AIAS…FEIV, LINA…YFFS, FLIP…LLGW, and ALAG…LLMA. Residues aspartate 648, aspartate 672, and aspartate 676 each coordinate Ca(2+). Lysine 679 is a binding site for substrate. Residues 698-718 form a helical membrane-spanning segment; sequence VVFTYVIVSTNIALGIWPSGL.

Belongs to the H(+)-translocating pyrophosphatase (TC 3.A.10) family. K(+)-insensitive subfamily. Homodimer. Mg(2+) is required as a cofactor.

It localises to the cell membrane. It carries out the reaction diphosphate + H2O + H(+)(in) = 2 phosphate + 2 H(+)(out). Its function is as follows. Proton pump that utilizes the energy of pyrophosphate hydrolysis as the driving force for proton movement across the membrane. Generates a proton motive force. The protein is K(+)-insensitive pyrophosphate-energized proton pump of Pyrobaculum aerophilum (strain ATCC 51768 / DSM 7523 / JCM 9630 / CIP 104966 / NBRC 100827 / IM2).